The primary structure comprises 554 residues: Transcription factor 7-like 1-A (554 aa).

The segment covering 1 to 11 (MPQLNSGGGDE) has biased composition (gly residues). Residues 1–61 (MPQLNSGGGD…SENHSSDSDS (61 aa)) form an interaction with CTNNB1-A region. 3 disordered regions span residues 1 to 73 (MPQL…REAF), 183 to 213 (GTPPGHLSPEIDPKTGIPRPPHPSELSPYYP), and 391 to 475 (WSAR…LTTK). Composition is skewed to basic and acidic residues over residues 17-32 (ELIRFKDEGEQEEKSP) and 52-73 (SENHSSDSDSEVERRPPPREAF). Residues 109 to 312 (LGGHYLPNGA…SPNLHTKSNM (204 aa)) form an interaction with AES and TLE4-A region. The segment at residues 324 to 392 (IKKPLNAFML…LHSQLYPSWS (69 aa)) is a DNA-binding region (HMG box). The segment covering 407-416 (KQSPEMETHT) has biased composition (basic and acidic residues). Residues 408 to 554 (QSPEMETHTK…PLSLVTKSSD (147 aa)) form an interaction with CTBP-B region. Positions 445 to 464 (SPATPSAALASPAAPAATHS) are enriched in low complexity. Over residues 465-474 (EQAQPLSLTT) the composition is skewed to polar residues.

The protein belongs to the TCF/LEF family. As to quaternary structure, interacts with csnk1e, ctnnb1-A, ctbp-B, dact1-A and gsk3b. May interact with ase and tle4-A. In terms of processing, phosphorylated. Phosphorylation by csnk1e promotes binding to ctnnb1-A while phosphorylation by gsk3b may reverse this effect.

The protein localises to the cytoplasm. Its subcellular location is the nucleus. Participates in the Wnt signaling pathway. Binds to DNA and acts as a repressor in the absence of ctnnb1-A and possibly ctnnb1-B, and as an activator in the presence of these proteins. Required early in development for the establishment of the dorsal body axis in response to maternal Wnt signaling. Also required during development of the CNS for the establishment of dorsal-ventral patterning in the prospective diencephalon. The chain is Transcription factor 7-like 1-A (tcf7l1-a) from Xenopus laevis (African clawed frog).